Consider the following 225-residue polypeptide: Insulin-induced gene 2 protein (225 aa).

The Cytoplasmic portion of the chain corresponds to 1 to 28 (MAEGETESPRPKKRGPYISSVTSQSVNV). The chain crosses the membrane as a helical span at residues 29 to 51 (VIRGVVLFFIGVFLALVLNLLQI). The Lumenal portion of the chain corresponds to 52 to 70 (QRNVTLFPPDVITSIFSSA). A helical membrane pass occupies residues 71-88 (WWVPPCCGTASAVIGLLY). Topologically, residues 89 to 103 (PCIDRHLGEPHKFKR) are cytoplasmic. The chain crosses the membrane as a helical span at residues 104-126 (EWSSVMRCVAVFVGINHASAKVD). The Lumenal portion of the chain corresponds to 127-129 (FDN). A helical transmembrane segment spans residues 130–148 (NFQFSLTLAALSVGLWWTF). Residues 149-153 (DRSRS) lie on the Cytoplasmic side of the membrane. The residue at position 151 (S151) is a Phosphoserine. A helical transmembrane segment spans residues 154 to 175 (GFGLGVGIAFLATVVTQLLVYN). At 176–189 (GVYQYTSPDFLYVR) the chain is on the lumenal side. A helical membrane pass occupies residues 190–207 (SWLPCIFFAGGITMGNIG). Over 208–225 (RQLAMYECKVIAEKSHQE) the chain is Cytoplasmic. C215 bears the Cysteine sulfenic acid (-SOH); alternate mark. Residue C215 forms a Glycyl cysteine thioester (Cys-Gly) (interchain with G-Cter in ubiquitin); alternate linkage. Positions 219–225 (AEKSHQE) match the KxHxx motif.

Belongs to the INSIG family. In terms of assembly, interacts with SCAP; interaction is direct and only takes place in the presence of sterols; it prevents interaction between SCAP and the coat protein complex II (COPII). Associates with the SCAP-SREBP complex (composed of SCAP and SREBF1/SREBP1 or SREBF2/SREBP2); association is mediated via its interaction with SCAP and only takes place in the presence of sterols. Interacts with RNF139. Interacts with RNF145. In terms of processing, phosphorylation at Ser-151 by PCK1 reduces binding to oxysterol, disrupting the interaction between INSIG2 and SCAP, thereby promoting nuclear translocation of SREBP proteins (SREBF1/SREBP1 or SREBF2/SREBP2) and subsequent transcription of downstream lipogenesis-related genes. Polyubiquitinated by AMFR/gp78 at Cys-215 in some tissues such as adipose tissues, undifferentiated myoblasts and liver, leading to its degradation. In differentiated myotubes, Cys-215 oxidation prevents ubiquitination at the same site, resulting in protein stabilization. Post-translationally, oxidized at Cys-215 in differentiated myotubes, preventing ubiquitination at the same site, and resulting in protein stabilization.

The protein localises to the endoplasmic reticulum membrane. Oxysterol-binding protein that mediates feedback control of cholesterol synthesis by controlling both endoplasmic reticulum to Golgi transport of SCAP and degradation of HMGCR. Acts as a negative regulator of cholesterol biosynthesis by mediating the retention of the SCAP-SREBP complex in the endoplasmic reticulum, thereby blocking the processing of sterol regulatory element-binding proteins (SREBPs) SREBF1/SREBP1 and SREBF2/SREBP2. Binds oxysterol, including 22-hydroxycholesterol, 24-hydroxycholesterol, 25-hydroxycholesterol and 27-hydroxycholesterol, regulating interaction with SCAP and retention of the SCAP-SREBP complex in the endoplasmic reticulum. In presence of oxysterol, interacts with SCAP, retaining the SCAP-SREBP complex in the endoplasmic reticulum, thereby preventing SCAP from escorting SREBF1/SREBP1 and SREBF2/SREBP2 to the Golgi. Sterol deprivation or phosphorylation by PCK1 reduce oxysterol-binding, disrupting the interaction between INSIG2 and SCAP, thereby promoting Golgi transport of the SCAP-SREBP complex, followed by processing and nuclear translocation of SREBF1/SREBP1 and SREBF2/SREBP2. Also regulates cholesterol synthesis by regulating degradation of HMGCR: initiates the sterol-mediated ubiquitin-mediated endoplasmic reticulum-associated degradation (ERAD) of HMGCR via recruitment of the reductase to the ubiquitin ligase RNF139. The chain is Insulin-induced gene 2 protein from Rattus norvegicus (Rat).